The sequence spans 24 residues: Acetylcholine receptor subunit alpha (24 aa).

This sequence belongs to the ligand-gated ion channel (TC 1.A.9) family. Acetylcholine receptor (TC 1.A.9.1) subfamily. Alpha-1/CHRNA1 sub-subfamily. In terms of assembly, one of the alpha chains that assemble within the acetylcholine receptor, a pentamer of two alpha chains, a beta, a delta, and a gamma or epsilon chains.

It is found in the postsynaptic cell membrane. It localises to the cell membrane. It carries out the reaction K(+)(in) = K(+)(out). It catalyses the reaction Na(+)(in) = Na(+)(out). Functionally, upon acetylcholine binding, the AChR responds by an extensive change in conformation that affects all subunits and leads to opening of an ion-conducting channel across the plasma membrane. The polypeptide is Acetylcholine receptor subunit alpha (chrna1) (Electrophorus electricus (Electric eel)).